Reading from the N-terminus, the 356-residue chain is Phosphoserine aminotransferase (356 aa).

Arginine 41 provides a ligand contact to L-glutamate. Pyridoxal 5'-phosphate is bound by residues 76–77, tryptophan 102, threonine 150, aspartate 169, and glutamine 192; that span reads AS. Lysine 193 carries the N6-(pyridoxal phosphate)lysine modification. Pyridoxal 5'-phosphate is bound at residue 234–235; it reads NT.

The protein belongs to the class-V pyridoxal-phosphate-dependent aminotransferase family. SerC subfamily. As to quaternary structure, homodimer. It depends on pyridoxal 5'-phosphate as a cofactor.

The protein localises to the cytoplasm. The catalysed reaction is O-phospho-L-serine + 2-oxoglutarate = 3-phosphooxypyruvate + L-glutamate. It catalyses the reaction 4-(phosphooxy)-L-threonine + 2-oxoglutarate = (R)-3-hydroxy-2-oxo-4-phosphooxybutanoate + L-glutamate. The protein operates within amino-acid biosynthesis; L-serine biosynthesis; L-serine from 3-phospho-D-glycerate: step 2/3. Its pathway is cofactor biosynthesis; pyridoxine 5'-phosphate biosynthesis; pyridoxine 5'-phosphate from D-erythrose 4-phosphate: step 3/5. In terms of biological role, catalyzes the reversible conversion of 3-phosphohydroxypyruvate to phosphoserine and of 3-hydroxy-2-oxo-4-phosphonooxybutanoate to phosphohydroxythreonine. This Flavobacterium johnsoniae (strain ATCC 17061 / DSM 2064 / JCM 8514 / BCRC 14874 / CCUG 350202 / NBRC 14942 / NCIMB 11054 / UW101) (Cytophaga johnsonae) protein is Phosphoserine aminotransferase.